We begin with the raw amino-acid sequence, 73 residues long: Sec-independent protein translocase protein TatA (73 aa).

Residues 1–21 form a helical membrane-spanning segment; that stretch reads MGSFSIGHWLIVLAIIVLLFG. The interval 43–73 is disordered; sequence MEDTTPEKSEKVEHKEESATSQKIEETTKNA.

Belongs to the TatA/E family. The Tat system comprises two distinct complexes: a TatABC complex, containing multiple copies of TatA, TatB and TatC subunits, and a separate TatA complex, containing only TatA subunits. Substrates initially bind to the TatABC complex, which probably triggers association of the separate TatA complex to form the active translocon.

The protein resides in the cell inner membrane. Its function is as follows. Part of the twin-arginine translocation (Tat) system that transports large folded proteins containing a characteristic twin-arginine motif in their signal peptide across membranes. TatA could form the protein-conducting channel of the Tat system. This is Sec-independent protein translocase protein TatA from Campylobacter concisus (strain 13826).